Here is a 236-residue protein sequence, read N- to C-terminus: Protein INCA1 (236 aa).

Ser23 is subject to Phosphoserine. Residues 75–99 form an interaction with CCNA1 and CCNA1/CDK2 complex; essential for CDK2 inhibitory activity region; sequence GLYPPEQLPPPEMLWRRKKRRPCLE. The Nuclear localization signal signature appears at 90 to 95; sequence RRKKRR. The residue at position 182 (Thr182) is a Phosphothreonine. Ser191 and Ser194 each carry phosphoserine.

This sequence belongs to the INCA family. Interacts with CCNA1. Interacts with CCNA2, CCNB1 and CCNE1. Found in a complex with CCNA1 and CDK2. Interacts with ZNF16; the interaction inhibits INCA1 activity and induces the cell cycle process. Interacts with SPACA9. Interacts with the CCNA1/CDK2 complex. Interacts with ING5, DAZAP2, RNF26, USP15, SPOUT1, DPH7, TRIM26 and RAB5C. In terms of processing, phosphorylated when part of a complex with CCNA1 and CDK2. Strongly phosphorylated by CDK2 on its C-terminal region spanning amino acid 149-221. Less intensively phosphorylated by CDK2 on its first 75 amino acid residues. In terms of tissue distribution, detected in testis, and at lower levels in ovary. Detected at very low levels in testis tumors. Down-regulated in bone marrow cells in acute myeloid and lymphoid leukemia patients as compared with normal bone marrow cells.

The protein resides in the nucleus. It localises to the cytoplasm. In terms of biological role, binds to CDK2-bound cyclins and inhibits the kinase activity of CDK2; binding to cyclins is critical for its function as CDK inhibitor. Inhibits cell growth and cell proliferation and may play a role in cell cycle control. Required for ING5-mediated regulation of S-phase progression, enhancement of Fas-induced apoptosis and inhibition of cell growth. This is Protein INCA1 (INCA1) from Homo sapiens (Human).